The following is a 3511-amino-acid chain: MADEEKKAKKGKKGKKAPEPEKPKRSLKGTSRLFMGFRDRTPKISKKGQFRSASAFFWGLHTGPQKTKRKKKARTVLKSTSKLMTQMRVGKKKRAMKGKKPSFMVIRFPGRRGYGRLRPRAQSLSKASTAINWLTKKFLLKKAEESGSEQATVDAWLQRSSSRVGSRKLPFPSGAEILRHGGRLRRFPRSHSIYSSGEPVGFLPFEDEAPFRHAGSRKSLYGLEGFQDLGEYYDYHREGDDYYDQQSLYHYEEQEPYLAEFGGYSPAWPPYDDYGYPPGDPYNYYHPDYYGDTLYPGYAYGYGYGYDDFEPPYAPPSGYSSPYSYHDSFESEAYPYSYYLDPYATHHMPYPPYDFPYDTPYDIPYFDPYGVPYAEGVYGGGAEAIYPPGMPYVYPEEPAFMYPWVPPPIMSPHNPYAHPMDDIAELEEPEETGEERQSTSFRLPSAAFFEQQGMDKPARSKLSLIRKFRLFPRPQVKLFGKEKLEVPLPPSLDIPLPLGDAEGEEEEEEMPPVPTMPYTHPYWSFLTPRQRNLQRALSAFGARQGLGFGPEFGHPTPRPATSLARFLKKTLSEKKPIPRLRGSQKARGGRPPVREAAYKRFGYKLAGMDPDRPNTPIVLRRSQPQARNNNNSHGPPSPRPAPRALTHWSALISPPMPAPSPSPASPLTPPFSPTFSRPPRLASPYGSLRQHPPPWAAPAHVPFPPQANWWGFAEPPGTSPEVAPDLLAFPVPRPSFRASRSRSRRAAYGFPSPSLIGSRRRPHLPSPQPSLRSLPGQGYHSPLGPLSPQLSLRRGPFQPPFPPPPRRPQSLREAFSLRRASGRLGPPRSPVLGSPRPPSPPPLLKHGPRHRSLNLPSRLPRTWRRLSEPPTRAVKPWVHRAYPPPPSAGPWGASTGALEQQENQREAEDSETPWTVPPLAPSWDVDMPPTQRPPSPWPEGIGSLRGFSRPPPVPENPLLEHTSPSCEPQSEDRVSNLTGIFLGQHHDPGPGQLTKSADPSLEKPEEVVTLGDPQPPAEPEALNPTPPNKNVVSERKVLRLSASYPLVTCKQARATWPQWHRWKTVSRTPAPLAPTRAPGPLLKAGEQPRAEPGRFAVVMPQVRGVSSFRPKGPAPVQPPEHPDQDPEQGPAPQACSLRWPRLWPPTDAHCLWSRIRTYSSQSHLRGHGGDCHKSLWKKTRPQSWQNKMHSIRNLPSMRSREQHREDGVEDMTQLEDLQETTVLANLKTRFERNLIYTYIGSILVSVNPYRMFAIYGPEQVQQYSGRALGENPPHLFAIANLAFAKMLDAKQNQCVIISGESGSGKTEATKLILRCLAAMNQRRDVMQQIKILEATPLLEAFGNAKTVRNDNSSRFGKFVEIFLEGGVICGAITSQYLLEKSRIVFQAKNERNYHIFYELLAGLPAQLRQAFSLQEAETYYYLNQGGNCEIAGKSDADDFRRLLAAMEVLGFTSEDQDSIFRILASILHLGNVYFEKHETDAQEVASVVSAREIQAVAELLQVSPEGLQKAITFKVTETIREKIFTPLTVESAVDARDAIAKVLYALLFGWLITRVNALVSPKQDTLSIAILDIYGFEDLSFNSFEQLCINYANENLQYLFNKIVFQEEQEEYIREQMDWREIAFADNQPCINLISLKPYGILRILDDQCCFPQATDHTFLQKCHYHHGANPLYSKPKMPLPEFTIKHYAGKVTYQVHKFLDKNHDQVRQDVLDLFVHSRTRVVAHLFSSHAAQTAPPRLGKSSSITRLYKAHTVAAKFQQSLLDLVEKMERCNPLFVRCLKPNHKKEPGLFEPDVMMAQLRYSGVLETVRIRKEGFPVRLPFQVFIDRYRCLVALKLNVPADGDMCVSLLSRLCTVTPDMYRVGISKLFLKEHLHQLLESMRERVQNRAALTLQRYLRGFFIQRHFRSLRRKIILLQSRARGFLARQRYQQMRQSLLKFRSLVHTYVNRRRYLKLRAEQRRRAQEAWLREQEELSKREVVPVRHLEVPAEVAGLLQAAAGLKLSSGPRVAVVRAPRLQAEPCVTLPLDINNYPMAKFIRCHFKEPSFGMLTVPLKMPLTRLPVEHHAEAISVFKLILRFMGDPHLHGTQEMILGNYIVHQGLVEPALRDEILAQLANQVWRNPNAYNSKRGWLLLAACLSGFAPSPHLDKFLLKFVSDYGQNGFQAVCQHRLLQAMGSGAARTFPPTQLEWTAIQEKASMALDVSCFNGDQFSCPVHTWSTGEAVAGDILKHRGLADGWRGWTVAMKNGVQWAELAGHDYVLDLVSDLELLRDFPRQKSYFIVGAEGPLAGRGDTRGVFGNCWDSDEDTPTRPQPQDHVAKMPDLDGYCSHKEDGTNGETEAQRWTSNRQAVDSIGESTVPPRELDGYLDSLFDPVLACGDADLEKPTAIAYRMKGGGQPGGGGGSTSEDTSRRPPEPKLKPIPGLDASTLALQQAFIHRQAVLLAREMTLQALALQQQPLSATSRPQLPERPLAPEARPKTVVGTGPPAKPVLVRPTPQSWAPGSVAKAPKIPSKPVAVPILAQDWTAPESISASPELVRYSTLNSEHFPQPTQQIRSIIKQYKQPPWAGHPEARRTDGGKVFRRPPDPHEEALMILKGQKTQLAVVPGTQVSREAVAMVKPVTSAPRPCMGPTPVQPSRSLEPPEDPVQTQLHRLVNPNFYGYQDIPWRIFLRKEVFYPKDNYSHPVQLDLLFRQILHDTFSEACLRISEDERLQMKALFAQNQLDTQRPLVTESVKRAAISMARDSWEIYFSRLFPAMGSVGTGVQILAVSHTGIKLLQMVKGSKEASRRLRVLCAYSFADILFVTMPSQNMLEFNLSNEKLILFSARAQQVKTLVDTFILELKKDSDYVVAVRNFLSEDPELLSFHKGDIIHLQSLEPTRVGYSAGCVVRKKLVYLEELRRRGPDFGWRFGAVHGRVGRFPSELVQPAAAPDFLQLPAEPGRGRAAAVAAAVASAAAAQEVGRRREGPPVRARSADSGEDSIALPPSTMLEFAQKYFRDPRRRPRDGLKLKSKEDRESKTLEDVLCFTKVPIQESLIELSDSNLNKMAVDMFVAVMRFMGDAPLKGQSELDVLCTLLKLCGDHEVMRDECYCQIVKQITDNSSPKQDSCQRGWRLLYIMAAYYSCSEVFYPYLIRFLQHVSWTPGLPFQGIAKACEQNLQKTLRFGGRLEFPSNMELRAMLAGRSSKRQLFLLPGGLERHLKIKTCTVALDVIEGLCTEMALTRPEAFDEYVIFVVTNRGQHVCPLSCRAYILDVASEMEQVDGGYTLWFRRVLWDQPLKFENELYVTMHYNQVLPDYLKGLFSSVPARQPTEQQLQQVSKLASLQHRAKDHFYLPSVREVQEYIPAQLYHTTAGDTWLNLVSQHRQQTQALSPHQARAQFLGLLSAFPLFGSSFFFIQSCSNVLVPAPCILAVNHNGLNFLSTKTHELIVKIPLKEIQSTWTQQPTANSSYPYVEISLGDVAAQRTMQLQLEQGLELCRVVAVHVESMLSAREERLTLPPSEITLL.

Disordered regions lie at residues 1–44, 574–690, 712–1030, and 1105–1135; these read MADE…TPKI, KKPI…SLRQ, FAEP…PNKN, and VSSF…PQAC. The segment covering 622–634 has biased composition (polar residues); it reads SQPQARNNNNSHG. Residues 654 to 672 show a composition bias toward pro residues; it reads PPMPAPSPSPASPLTPPFS. Over residues 769–792 the composition is skewed to low complexity; the sequence is PSLRSLPGQGYHSPLGPLSPQLSL. Residues 797–807 show a composition bias toward pro residues; that stretch reads FQPPFPPPPRR. A Myosin motor domain is found at 1206–1883; it reads DGVEDMTQLE…LHQLLESMRE (678 aa). An ATP-binding site is contributed by 1299–1306; it reads GESGSGKT. The stretch at 1307 to 1334 forms a coiled coil; it reads EATKLILRCLAAMNQRRDVMQQIKILEA. Positions 1776-1783 are actin-binding; the sequence is FVRCLKPN. The interval 1872–2013 is neck or regulatory domain; that stretch reads EHLHQLLESM…SSGPRVAVVR (142 aa). IQ domains lie at 1886–1908 and 1909–1938; these read QNRA…HFRS and LRRK…SLLK. Residues 2014–3511 are tail; the sequence is APRLQAEPCV…TLPPSEITLL (1498 aa). Residues 2049–2195 form the MyTH4 1 domain; sequence MLTVPLKMPL…PTQLEWTAIQ (147 aa). Disordered regions lie at residues 2330-2359, 2392-2425, 2460-2509, 2565-2584, and 2629-2648; these read SHKE…GEST, YRMK…PIPG, PLSA…SVAK, KQPP…GKVF, and RPCM…PPED. Positions 2337-2351 are enriched in polar residues; that stretch reads NGETEAQRWTSNRQA. The segment covering 2395–2406 has biased composition (gly residues); the sequence is KGGGQPGGGGGS. The span at 2410-2420 shows a compositional bias: basic and acidic residues; it reads DTSRRPPEPKL. Positions 2573–2584 are enriched in basic and acidic residues; the sequence is PEARRTDGGKVF. The SH3 domain occupies 2848–2934; that stretch reads KDSDYVVAVR…PSELVQPAAA (87 aa). Positions 2964 to 2984 are disordered; that stretch reads EVGRRREGPPVRARSADSGED. Residues 2965-2980 are compositionally biased toward basic and acidic residues; the sequence is VGRRREGPPVRARSAD. Residues 3031 to 3185 enclose the MyTH4 2 domain; it reads FTKVPIQESL…PSNMELRAML (155 aa). The FERM domain occupies 3190–3511; that stretch reads SKRQLFLLPG…TLPPSEITLL (322 aa).

Belongs to the TRAFAC class myosin-kinesin ATPase superfamily. Myosin family. In terms of assembly, interacts with the third PDZ domain of WHRN which is necessary for localization of WHRN to stereocilium tips. Interacts with FASLG. Interacts with EPS8. As to expression, in the developing inner ear, expressed in cochlea and vestibular apparatus. Expression appears to be restricted to cochlear neurosensory cells and upper epithelial layer of macula saccula. Also expressed in macula utriculi and cristae ampullaris of the semicircular canals. In adult cochlear hair cells, highest expression in stereocilia and apical body.

It is found in the cell projection. The protein localises to the stereocilium. Its subcellular location is the cytoplasm. The protein resides in the cytoskeleton. Functionally, myosins are actin-based motor molecules with ATPase activity. Unconventional myosins serve in intracellular movements. Their highly divergent tails are presumed to bind to membranous compartments, which would be moved relative to actin filaments. Required for the arrangement of stereocilia in mature hair bundles. This chain is Unconventional myosin-XV (Myo15a), found in Mus musculus (Mouse).